A 38-amino-acid polypeptide reads, in one-letter code: Photosystem II reaction center protein L (38 aa).

A helical membrane pass occupies residues 17 to 37 (SLFWGLLLIFVLAVLFSSYFF).

It belongs to the PsbL family. In terms of assembly, PSII is composed of 1 copy each of membrane proteins PsbA, PsbB, PsbC, PsbD, PsbE, PsbF, PsbH, PsbI, PsbJ, PsbK, PsbL, PsbM, PsbT, PsbX, PsbY, PsbZ, Psb30/Ycf12, at least 3 peripheral proteins of the oxygen-evolving complex and a large number of cofactors. It forms dimeric complexes.

It localises to the plastid. Its subcellular location is the chloroplast thylakoid membrane. In terms of biological role, one of the components of the core complex of photosystem II (PSII). PSII is a light-driven water:plastoquinone oxidoreductase that uses light energy to abstract electrons from H(2)O, generating O(2) and a proton gradient subsequently used for ATP formation. It consists of a core antenna complex that captures photons, and an electron transfer chain that converts photonic excitation into a charge separation. This subunit is found at the monomer-monomer interface and is required for correct PSII assembly and/or dimerization. The chain is Photosystem II reaction center protein L from Gracilaria tenuistipitata var. liui (Red alga).